The sequence spans 71 residues: uncharacterized protein (71 aa).

An HTH cro/C1-type domain is found at 5 to 59; that stretch reads IKEFRAKFNMTQEELAKRVGVRRETIVFLEKGKYNPSLKLAYKIARVFNAKIEDI. A DNA-binding region (H-T-H motif) is located at residues 16–35; it reads QEELAKRVGVRRETIVFLEK.

This is an uncharacterized protein from Archaeoglobus fulgidus (strain ATCC 49558 / DSM 4304 / JCM 9628 / NBRC 100126 / VC-16).